Here is a 445-residue protein sequence, read N- to C-terminus: Phosphoglucosamine mutase (445 aa).

The Phosphoserine intermediate role is filled by serine 102. 4 residues coordinate Mg(2+): serine 102, aspartate 241, aspartate 243, and aspartate 245. Serine 102 carries the phosphoserine modification.

It belongs to the phosphohexose mutase family. Mg(2+) serves as cofactor. Activated by phosphorylation.

It carries out the reaction alpha-D-glucosamine 1-phosphate = D-glucosamine 6-phosphate. Its function is as follows. Catalyzes the conversion of glucosamine-6-phosphate to glucosamine-1-phosphate. The protein is Phosphoglucosamine mutase of Escherichia coli O139:H28 (strain E24377A / ETEC).